The sequence spans 468 residues: Glutamate--tRNA ligase 2 (468 aa).

A 'HIGH' region motif is present at residues 9–19 (PSPTGSLHLGG). A 'KMSKS' region motif is present at residues 238–242 (KLSKR). Lysine 241 is a binding site for ATP.

Belongs to the class-I aminoacyl-tRNA synthetase family. Glutamate--tRNA ligase type 1 subfamily. Monomer.

It localises to the cytoplasm. The enzyme catalyses tRNA(Glu) + L-glutamate + ATP = L-glutamyl-tRNA(Glu) + AMP + diphosphate. Catalyzes the attachment of glutamate to tRNA(Glu) in a two-step reaction: glutamate is first activated by ATP to form Glu-AMP and then transferred to the acceptor end of tRNA(Glu). In Anaplasma phagocytophilum (strain HZ), this protein is Glutamate--tRNA ligase 2.